The sequence spans 233 residues: Leucyl/phenylalanyl-tRNA--protein transferase (233 aa).

Belongs to the L/F-transferase family.

It localises to the cytoplasm. The enzyme catalyses N-terminal L-lysyl-[protein] + L-leucyl-tRNA(Leu) = N-terminal L-leucyl-L-lysyl-[protein] + tRNA(Leu) + H(+). The catalysed reaction is N-terminal L-arginyl-[protein] + L-leucyl-tRNA(Leu) = N-terminal L-leucyl-L-arginyl-[protein] + tRNA(Leu) + H(+). It carries out the reaction L-phenylalanyl-tRNA(Phe) + an N-terminal L-alpha-aminoacyl-[protein] = an N-terminal L-phenylalanyl-L-alpha-aminoacyl-[protein] + tRNA(Phe). In terms of biological role, functions in the N-end rule pathway of protein degradation where it conjugates Leu, Phe and, less efficiently, Met from aminoacyl-tRNAs to the N-termini of proteins containing an N-terminal arginine or lysine. In Anaeromyxobacter dehalogenans (strain 2CP-C), this protein is Leucyl/phenylalanyl-tRNA--protein transferase.